The sequence spans 2067 residues: Nuclear receptor coactivator 6 (2067 aa).

Residues 1 to 932 (MVLDDLPNFE…PPRKKKNCHQ (932 aa)) are TBP/GTF2A-binding region. The tract at residues 1 to 1060 (MVLDDLPNFE…LPVSQNVHPP (1060 aa)) is CREBBP-binding region. The interval 1-1314 (MVLDDLPNFE…QAHKLDSVVV (1314 aa)) is NCOA1-binding region. Position 95 is an asymmetric dimethylarginine (Arg-95). 2 disordered regions span residues 181 to 253 (AVMT…RQMN) and 293 to 548 (TRPL…PGNS). Positions 293–304 (TRPLQQHQQQPQ) are enriched in low complexity. 6 stretches are compositionally biased toward polar residues: residues 338-347 (SLGTMTTNQG), 357-372 (MQAQ…TVQT), 383-405 (GSQQ…QFTA), 421-457 (PLQQ…QQQM), 465-506 (NPLS…QGPQ), and 526-548 (GQAN…PGNS). The segment at 777–931 (VNNSPSQVMG…KPPRKKKNCH (155 aa)) is NCOA6IP-binding region. Ser-888 carries the phosphoserine modification. The LXXLL motif 1 signature appears at 891–895 (LVNLL). Disordered regions lie at residues 903 to 1279 (HFGV…QGLN), 1313 to 1358 (VVNS…APKL), 1424 to 1481 (NIPQ…EENK), 1497 to 1581 (QLLD…IPPV), and 1769 to 1822 (LNPD…GKGK). Positions 907-916 (NNKQNNTNAN) are enriched in low complexity. The segment covering 917–929 (KPKKKKPPRKKKN) has biased composition (basic residues). Over residues 984–996 (QRPLPQMPPQLMQ) the composition is skewed to low complexity. The segment covering 999-1024 (APPPQPPQQQPQPQLPQQQQPPPPSQ) has biased composition (pro residues). Residues 1025–1044 (PQSQQQQQQQQMMMMLMMQQ) are compositionally biased toward low complexity. An asymmetric dimethylarginine mark is found at Arg-1050 and Arg-1061. The span at 1066 to 1078 (PDSQRMPVQQSGN) shows a compositional bias: polar residues. An Asymmetric dimethylarginine modification is found at Arg-1099. Residues 1103 to 1123 (SVNTPMGSNSRKMVYQENPQN) show a composition bias toward polar residues. Low complexity predominate over residues 1124–1137 (SSSSPLGEMSSLPE). Composition is skewed to polar residues over residues 1152–1165 (NMPS…NQLM), 1176–1194 (LSAT…SLPS), and 1205–1217 (APTQ…TPNR). Residues 1222–1235 (PYYPQTPNNRPPST) are compositionally biased toward pro residues. The segment covering 1313-1324 (VVNSGKQSNPGT) has biased composition (polar residues). Residues 1326–1349 (KRASPSNSRRSSPGSSRKTTPSPG) are compositionally biased toward low complexity. A compositionally biased stretch (polar residues) spans 1424–1435 (NIPQDSDCQNAQ). The short motif at 1495-1499 (LSQLL) is the LXXLL motif 2 element. Residues 1545 to 1562 (EPSTSLSSPHSSEPCSTL) show a composition bias toward low complexity. The interval 1644-2067 (SEGQSAAQSN…AVQSKRRKSK (424 aa)) is EP300/CRSP3-binding region. The segment covering 1775–1805 (SPQTNTSADQSTLPPSQPTTVVSSLLTNSPG) has biased composition (polar residues). Over residues 1806–1818 (SSANRRSPVSSSK) the composition is skewed to low complexity. Residues Lys-1822 and Lys-1825 each carry the N6-acetyllysine modification. 2 disordered regions span residues 1840-1911 (GSLE…LPGG) and 1957-2067 (VGSH…RKSK). The segment covering 1871-1883 (EQCSTELDSKTPT) has biased composition (polar residues). Low complexity predominate over residues 1892–1904 (MTSSPMAPSSTST). Positions 2005-2014 (EPKEIVEKSK) are enriched in basic and acidic residues. Ser-2022 is modified (phosphoserine).

Monomer and homodimer. Interacts in vitro with the basal transcription factors GTF2A and TBP, suggesting an autonomous transactivation function. Interacts with NCOA1, CRSP3, RBM14, the histone acetyltransferase proteins EP300 and CREBBP, and with methyltransferase proteins NCOA6IP and PRMT2. Interacts with RBM39. Component of the MLL2/3 complex (also named ASCOM complex), at least composed of KMT2D/MLL2 or KMT2C/MLL3, ASH2L, RBBP5, WDR5, NCOA6, DPY30, KDM6A, PAXIP1/PTIP, PAGR1 and alpha- and beta-tubulin. Interacts with ZNF335; may enhance ligand-dependent transcriptional activation by nuclear hormone receptors. Post-translationally, phosphorylated. Widely expressed. High expression in testis and weak expression in small intestine.

It is found in the nucleus. Nuclear receptor coactivator that directly binds nuclear receptors and stimulates the transcriptional activities in a hormone-dependent fashion. Coactivates expression in an agonist- and AF2-dependent manner. Involved in the coactivation of different nuclear receptors, such as for steroids (GR and ERs), retinoids (RARs and RXRs), thyroid hormone (TRs), vitamin D3 (VDR) and prostanoids (PPARs). Probably functions as a general coactivator, rather than just a nuclear receptor coactivator. May also be involved in the coactivation of the NF-kappa-B pathway. May coactivate expression via a remodeling of chromatin and its interaction with histone acetyltransferase proteins. Involved in placental, cardiac, hepatic and embryonic development. In Mus musculus (Mouse), this protein is Nuclear receptor coactivator 6 (Ncoa6).